Here is a 122-residue protein sequence, read N- to C-terminus: Proximal tubules-expressed gene protein (122 aa).

Residues 33–53 (WLTGLIAMTVFLFLVLVVYVA) form a helical membrane-spanning segment.

Belongs to the PDZK1-interacting protein 1/SMIM24 family. In terms of tissue distribution, expressed in prospective pronephric mesoderm at the late gastrula stage. After neurulation, expressed in the intermediate mesoderm, eye placode and blood islands. Expression becomes restricted to the pronephric proximal tubule during embryogenesis, but is absent from the connecting tubules.

The protein localises to the membrane. Essential for pronephric tubule development, acting upstream of pax8 and lhx1/lim1 and downstream of retinoic acid signaling to induce pronephric mesoderm to form pronephric tubule-specific cells. This chain is Proximal tubules-expressed gene protein (pteg), found in Xenopus laevis (African clawed frog).